The following is a 255-amino-acid chain: tRNA (guanine-N(1)-)-methyltransferase (255 aa).

Residues Gly-117 and 137 to 142 (IGDYVL) each bind S-adenosyl-L-methionine.

The protein belongs to the RNA methyltransferase TrmD family. In terms of assembly, homodimer.

The protein resides in the cytoplasm. It catalyses the reaction guanosine(37) in tRNA + S-adenosyl-L-methionine = N(1)-methylguanosine(37) in tRNA + S-adenosyl-L-homocysteine + H(+). Its function is as follows. Specifically methylates guanosine-37 in various tRNAs. The sequence is that of tRNA (guanine-N(1)-)-methyltransferase from Chromobacterium violaceum (strain ATCC 12472 / DSM 30191 / JCM 1249 / CCUG 213 / NBRC 12614 / NCIMB 9131 / NCTC 9757 / MK).